The primary structure comprises 249 residues: Uridylate kinase (249 aa).

22–25 provides a ligand contact to ATP; sequence KISG. The segment at 30–35 is involved in allosteric activation by GTP; that stretch reads GTQGFG. Glycine 64 serves as a coordination point for UMP. Residues glycine 65 and arginine 69 each coordinate ATP. UMP contacts are provided by residues aspartate 84 and 145-152; that span reads TGNPYFTT. Positions 173, 179, and 182 each coordinate ATP.

Belongs to the UMP kinase family. As to quaternary structure, homohexamer.

The protein localises to the cytoplasm. It carries out the reaction UMP + ATP = UDP + ADP. Its pathway is pyrimidine metabolism; CTP biosynthesis via de novo pathway; UDP from UMP (UMPK route): step 1/1. Allosterically activated by GTP. Inhibited by UTP. Functionally, catalyzes the reversible phosphorylation of UMP to UDP. This is Uridylate kinase from Ruegeria sp. (strain TM1040) (Silicibacter sp.).